The following is a 770-amino-acid chain: Glutamate carboxypeptidase 2 homolog (770 aa).

Over 1 to 25 (MPYVGVGAQTVSTSLTGAPMVKAYI) the chain is Cytoplasmic. A helical; Signal-anchor for type II membrane protein transmembrane segment spans residues 26–42 (AIAASLIFVFCIAALGV). The Extracellular segment spans residues 43–770 (HHSERKFNKF…CVVNTLRDVI (728 aa)). Residues N175 and N337 are each glycosylated (N-linked (GlcNAc...) asparagine). Residues 282-597 (SKKELFKGRT…QYWAELAKTF (316 aa)) are catalytic. Zn(2+) is bound by residues H387 and D397. Residue N417 is glycosylated (N-linked (GlcNAc...) asparagine). The Nucleophile role is filled by E435. Residues E436 and D464 each contribute to the Zn(2+) site. 3 N-linked (GlcNAc...) asparagine glycosylation sites follow: N469, N546, and N551. A Zn(2+)-binding site is contributed by H562. N-linked (GlcNAc...) asparagine glycosylation is found at N579, N606, and N630.

The protein belongs to the peptidase M28 family. M28B subfamily. Zn(2+) is required as a cofactor.

The protein resides in the membrane. The enzyme catalyses Release of an unsubstituted, C-terminal glutamyl residue, typically from Ac-Asp-Glu or folylpoly-gamma-glutamates.. The chain is Glutamate carboxypeptidase 2 homolog from Caenorhabditis elegans.